A 280-amino-acid polypeptide reads, in one-letter code: 4-diphosphocytidyl-2-C-methyl-D-erythritol kinase (280 aa).

Lysine 8 is an active-site residue. 91–101 (PVAAGLAGGSS) provides a ligand contact to ATP. Residue aspartate 133 is part of the active site.

The protein belongs to the GHMP kinase family. IspE subfamily.

The enzyme catalyses 4-CDP-2-C-methyl-D-erythritol + ATP = 4-CDP-2-C-methyl-D-erythritol 2-phosphate + ADP + H(+). It functions in the pathway isoprenoid biosynthesis; isopentenyl diphosphate biosynthesis via DXP pathway; isopentenyl diphosphate from 1-deoxy-D-xylulose 5-phosphate: step 3/6. In terms of biological role, catalyzes the phosphorylation of the position 2 hydroxy group of 4-diphosphocytidyl-2C-methyl-D-erythritol. The sequence is that of 4-diphosphocytidyl-2-C-methyl-D-erythritol kinase from Clostridium kluyveri (strain NBRC 12016).